A 333-amino-acid polypeptide reads, in one-letter code: cGAMP-activated phospholipase (333 aa).

The PNPLA domain maps to 10 to 191 (LALSGGGYRG…VGNAPGLFGL (182 aa)). The GXGXXG signature appears at 14–19 (GGGYRG). The GXSXG motif lies at 46-50 (GTSAG). Residue Ser48 is the Nucleophile of the active site. The Proton acceptor role is filled by Asp178. The DGA/G signature appears at 178-180 (DGG).

It belongs to the patatin family.

It carries out the reaction a 1,2-diacyl-sn-glycero-3-phosphocholine + H2O = a 2-acyl-sn-glycero-3-phosphocholine + a fatty acid + H(+). The enzyme catalyses 1,2-di-(9Z-octadecenoyl)-sn-glycero-3-phosphoethanolamine + 2 H2O = sn-glycero-3-phosphoethanolamine + 2 (9Z)-octadecenoate + 2 H(+). With respect to regulation, phospholipase activity is specifically activated upon cGAMP binding, which is produced by the cognate cyclic nucleotide synthase encoded in the same operon. Is not activated by cyclic dinucleotides 2',3'-cGAMP, c-diAMP or 3',3'-c-diGMP. Its function is as follows. Effector phospholipase of a CBASS antiviral system. CBASS (cyclic oligonucleotide-based antiphage signaling system) provides immunity against bacteriophages. The CD-NTase protein (CdnA) synthesizes cyclic nucleotides in response to infection; these serve as specific second messenger signals. The signals activate a diverse range of effectors, leading to bacterial cell death and thus abortive phage infection. A type II-A(GA) CBASS system. Phospholipase that is activated upon binding to the cyclic dinucleotide (CDN) second messenger 3',3'-cyclic GMP-AMP (cGAMP). Degrades phospholipids in the cell membrane. In terms of biological role, the capV-cdnA-cap2-cap3 operon provides about 10(4)-fold protection in strain BWHPSA011 against infection by phage PaMx41. In P.aeruginosa strain PAO1 it confers protection against phages PaMx41 and JBD18 but not JBD67 (JBD18 and JBD67 do not replicate in BWHPSA011 / Pa011). When acb2 in JBD67 is deleted this CBASS operon then protects against JDB67 also. This CBASS system limits prophage induction of lysogenized JBD67 as well as viral lytic replication. This is cGAMP-activated phospholipase from Pseudomonas aeruginosa (strain BWHPSA011 / Pa011).